We begin with the raw amino-acid sequence, 1193 residues long: Pyruvate carboxylase (1193 aa).

The 453-residue stretch at 41 to 493 (QFQKILVANR…WTTFIDDTPE (453 aa)) folds into the Biotin carboxylation domain. ATP contacts are provided by lysine 159, glutamate 243, and histidine 278. The ATP-grasp domain maps to 163 to 360 (RQLAIRCNVP…IVAAQIQIAA (198 aa)). Residue arginine 335 is part of the active site. In terms of domain architecture, Pyruvate carboxyltransferase spans 579–847 (CLIMDTTWRD…DPGLNSAHVR (269 aa)). Residues 587-591 (RDAHQ) and arginine 660 each bind substrate. Residue aspartate 588 coordinates a divalent metal cation. A divalent metal cation contacts are provided by lysine 756, histidine 786, and histidine 788. At lysine 756 the chain carries N6-carboxylysine. Residue threonine 921 participates in substrate binding. Positions 1116–1191 (KADVGDSSQV…DGQDLVCKIT (76 aa)) constitute a Biotinyl-binding domain. Lysine 1157 bears the N6-biotinyllysine mark.

It depends on biotin as a cofactor. Zn(2+) serves as cofactor.

It localises to the cytoplasm. It catalyses the reaction hydrogencarbonate + pyruvate + ATP = oxaloacetate + ADP + phosphate + H(+). It functions in the pathway carbohydrate biosynthesis; gluconeogenesis. In terms of biological role, pyruvate carboxylase catalyzes a 2-step reaction, involving the ATP-dependent carboxylation of the covalently attached biotin in the first step and the transfer of the carboxyl group to pyruvate in the second. This Aspergillus terreus protein is Pyruvate carboxylase (pyc).